The sequence spans 149 residues: MKVLLLEDVKNLGKAGEVCEVKDGYGNNFLIANQKAKLATNEVINKYKAEVKKKAEKEALEKAQKLQMVETLQTITLTIHKKVGANGSLFGAITKEEITERLKEQHASLNLDKKDIELKHPIKSTGIYEIEVKLGFGVVGTFKIDVVAE.

This sequence belongs to the bacterial ribosomal protein bL9 family.

Its function is as follows. Binds to the 23S rRNA. The polypeptide is Large ribosomal subunit protein bL9 (Helicobacter pylori (strain G27)).